Consider the following 888-residue polypeptide: Glutamate receptor 3 (888 aa).

A signal peptide spans 1–22; sequence MGQSVLRAVFFLVLGLLGHSHG. Residues 23–546 lie on the Extracellular side of the membrane; the sequence is GFPNTISIGG…GVFSFLDPLA (524 aa). N-linked (GlcNAc...) asparagine glycans are attached at residues Asn57, Asn260, Asn374, Asn409, and Asn416. An intrachain disulfide couples Cys85 to Cys334. L-glutamate-binding residues include Pro502, Thr504, and Arg509. A helical membrane pass occupies residues 547–567; the sequence is YEIWMCIVFAYIGVSVVLFLV. The Cytoplasmic segment spans residues 568-596; sequence SRFSPYEWHLEDNNEEPRDPQSPPDPPNE. The segment at residues 597-612 is an intramembrane region (helical; Pore-forming); the sequence is FGIFNSLWFSLGAFMQ. The stretch at 613 to 615 is an intramembrane region; that stretch reads QGC. Cys615 carries S-palmitoyl cysteine lipidation. The Cytoplasmic segment spans residues 616 to 621; sequence DISPRS. A helical transmembrane segment spans residues 622 to 642; sequence LSGRIVGGVWWFFTLIIISSY. The Extracellular portion of the chain corresponds to 643–817; that stretch reads TANLAAFLTV…DKTSALSLSN (175 aa). Positions 680, 681, and 731 each coordinate L-glutamate. Cys744 and Cys799 are disulfide-bonded. The chain crosses the membrane as a helical span at residues 818–838; that stretch reads VAGVFYILVGGLGLAMMVALI. Topologically, residues 839-888 are cytoplasmic; it reads EFCYKSRAESKRMKLTKNTQNFKPAPATNTQNYATYREGYNVYGTESVKI. Cys841 is lipidated: S-palmitoyl cysteine. A phosphotyrosine mark is found at Tyr871 and Tyr881.

The protein belongs to the glutamate-gated ion channel (TC 1.A.10.1) family. GRIA3 subfamily. In terms of assembly, homotetramer or heterotetramer of pore-forming glutamate receptor subunits. Tetramers may be formed by the dimerization of dimers. Interacts with PICK1, GRIP1 and GRIP2. Found in a complex with GRIA1, GRIA2, GRIA4, CNIH2, CNIH3, CACNG2, CACNG3, CACNG4, CACNG5, CACNG7 and CACNG8. Interacts with CACNG5. Found in a complex with GRIA1, GRIA2, GRIA4, DLG4, CACNG8 and CNIH2.

Its subcellular location is the cell membrane. The protein localises to the postsynaptic cell membrane. The protein resides in the postsynaptic density membrane. The enzyme catalyses Ca(2+)(in) = Ca(2+)(out). In terms of biological role, ionotropic glutamate receptor that functions as a ligand-gated cation channel, gated by L-glutamate and glutamatergic agonists such as alpha-amino-3-hydroxy-5-methyl-4-isoxazolepropionic acid (AMPA), quisqualic acid, and kainic acid. L-glutamate acts as an excitatory neurotransmitter at many synapses in the central nervous system and plays an important role in fast excitatory synaptic transmission by inducing long-term potentiation. Binding of the excitatory neurotransmitter L-glutamate induces a conformation change, leading to the opening of the cation channel, and thereby converts the chemical signal to an electrical impulse upon entry of calcium. The receptor then desensitizes rapidly and enters a transient inactive state, characterized by the presence of bound agonist. In the presence of CACNG8, shows resensitization which is characterized by a delayed accumulation of current flux upon continued application of glutamate. This chain is Glutamate receptor 3, found in Rattus norvegicus (Rat).